The chain runs to 360 residues: Peptide chain release factor 1 (360 aa).

At glutamine 235 the chain carries N5-methylglutamine. The segment covering 285-295 (RQAAEQTDMRR) has biased composition (basic and acidic residues). Residues 285-309 (RQAAEQTDMRRNLLGSGDRSDKIRT) form a disordered region.

The protein belongs to the prokaryotic/mitochondrial release factor family. Methylated by PrmC. Methylation increases the termination efficiency of RF1.

Its subcellular location is the cytoplasm. Its function is as follows. Peptide chain release factor 1 directs the termination of translation in response to the peptide chain termination codons UAG and UAA. The protein is Peptide chain release factor 1 of Haemophilus influenzae (strain 86-028NP).